Here is a 273-residue protein sequence, read N- to C-terminus: MAKANSSFSEVQIARRIKEGRGQGHGKDYIPWLTVQEVPSSGRSHRIYSHKTGRVHHLLSDLELAVFLSLEWESSVLDIREQFPLLPSDTRQIAIDSGIKHPVIRGVDQVMSTDFLVDCKDGPFEQFAIQVKPAAALQDERTLEKLELERRYWQQKQIPWFIFTDKEINPVVKENIEWLYSVKTEEVSAELLAQLSPLAHILQEKGDENIINVCKQVDIAYDLELGKTLSEIRALTANGFIKFNIYKSFRANKCADLCISQVVNMEELRYVAN.

Active-site residues include Glu-63 and Glu-73. A DNA-binding region (H-T-H motif) is located at residues 90-108; sequence TRQIAIDSGIKHPVIRGVD. Asp-114 is an active-site residue. The Mg(2+) site is built by Asp-114, Gln-130, and Val-131. The active site involves Lys-132.

Heteromer with TnsB. Interacts with TnsC (via C-terminus); this interaction allows TnsA to bind donor DNA. Requires Mg(2+) as cofactor. The cofactor is Mn(2+).

Required for Tn7 transposition. Forms the transposase, together with TnsB. TnsA executes the 5'-DNA strand breakage reaction. TnsABC and TnsD promote high-frequency insertion of Tn7 into a specific target site known as att-Tn7 whereas TnsABC and TnsE promote low-frequency insertion into many different sites. The polypeptide is Transposon Tn7 transposition protein TnsA (Escherichia coli).